The primary structure comprises 408 residues: MARDKFERSKPHVNIGTIGHVDHGKTTLTAAISATLSQYTGKSKKFDEIDSAPEERARGITINTAHVEYETDKWYYAHVDCPGHADYVKNMITGAAQMDGAILVCSAANGPMPQTREHILLAKQVGVPYIVVFLNKADMVDDEELLELVQLEVQELLEKYDFPGSEIPFVAGSALLALEAVANNPTIKRGEDKWVDTIYQLMDKVDEYIPTPERETDKAFLMAVEDVFSITGRGTVATGRIERGKVKVGDTIEIVGLRETRNTTITGLEMFQKSLDEALAGDNVGILVRGIQKTDIERGMVLAAPGSITPHTKFEGEVYVLTKEEGGRHTPFFSGYRPQFYVRTTDVTGTIAQFTSDDGSTAEMVMPGDRIKMTAQLIHPIAIEKGMRFAIREGGRTVGAGVVSKIIE.

The tr-type G domain occupies 10–213 (KPHVNIGTIG…KVDEYIPTPE (204 aa)). The segment at 19-26 (GHVDHGKT) is G1. 19–26 (GHVDHGKT) contacts GTP. Residue threonine 26 participates in Mg(2+) binding. The segment at 59-63 (GITIN) is G2. The interval 80–83 (DCPG) is G3. Residues 80 to 84 (DCPGH) and 135 to 138 (NKAD) contribute to the GTP site. Residues 135–138 (NKAD) form a G4 region. Positions 173–175 (SAL) are G5.

This sequence belongs to the TRAFAC class translation factor GTPase superfamily. Classic translation factor GTPase family. EF-Tu/EF-1A subfamily.

The protein localises to the plastid. It localises to the chloroplast. The catalysed reaction is GTP + H2O = GDP + phosphate + H(+). In terms of biological role, GTP hydrolase that promotes the GTP-dependent binding of aminoacyl-tRNA to the A-site of ribosomes during protein biosynthesis. This Guillardia theta (Cryptophyte) protein is Elongation factor Tu, chloroplastic (tufA).